The sequence spans 221 residues: MATSTMSVCSSAYSDSWQVDACPESCCEPPCCATSCCAPAPCLTLVCTPVSCVSSPCCQAACEPSPCQSGCTSSCTPSCCQQSSCQPACCTSSPCQQACCVPVCCKPVCCVPVCCKPVCCKPICCVPVCSGASSSCCQQSSRQPACCTTSCCRPSSSVSLLCRPVCRSTCCVPIPSCCAPASTCQPSCCRPASCVSLLCRPTCSRLSSACCGLSSGQKSSC.

A run of 18 repeats spans residues 26–30 (CCEPP), 31–35 (CCATS), 36–40 (CCAPA), 57–61 (CCQAA), 79–83 (CCQQS), 89–93 (CCTSS), 99–103 (CCVPV), 104–108 (CCKPV), 109–113 (CCVPV), 114–118 (CCKPV), 119–123 (CCKPI), 124–128 (CCVPV), 136–140 (CCQQS), 146–150 (CCTTS), 151–155 (CCRPS), 177–181 (CCAPA), 188–192 (CCRPA), and 210–214 (CCGLS). Positions 26-214 (CCEPPCCATS…RLSSACCGLS (189 aa)) are 18 X 5 AA repeats of C-C-X(3).

This sequence belongs to the KRTAP type 10 family. In terms of assembly, interacts with hair keratins. In terms of tissue distribution, restricted to a narrow region of the hair fiber cuticle, lying approximately 20 cell layers above the apex of the dermal papilla of the hair root; not detected in any other tissues.

In the hair cortex, hair keratin intermediate filaments are embedded in an interfilamentous matrix, consisting of hair keratin-associated proteins (KRTAP), which are essential for the formation of a rigid and resistant hair shaft through their extensive disulfide bond cross-linking with abundant cysteine residues of hair keratins. The matrix proteins include the high-sulfur and high-glycine-tyrosine keratins. In Homo sapiens (Human), this protein is Keratin-associated protein 10-3 (KRTAP10-3).